The sequence spans 241 residues: 3-deoxy-manno-octulosonate cytidylyltransferase (241 aa).

It belongs to the KdsB family.

Its subcellular location is the cytoplasm. It carries out the reaction 3-deoxy-alpha-D-manno-oct-2-ulosonate + CTP = CMP-3-deoxy-beta-D-manno-octulosonate + diphosphate. It participates in nucleotide-sugar biosynthesis; CMP-3-deoxy-D-manno-octulosonate biosynthesis; CMP-3-deoxy-D-manno-octulosonate from 3-deoxy-D-manno-octulosonate and CTP: step 1/1. Its pathway is bacterial outer membrane biogenesis; lipopolysaccharide biosynthesis. In terms of biological role, activates KDO (a required 8-carbon sugar) for incorporation into bacterial lipopolysaccharide in Gram-negative bacteria. The sequence is that of 3-deoxy-manno-octulosonate cytidylyltransferase from Rickettsia typhi (strain ATCC VR-144 / Wilmington).